Reading from the N-terminus, the 327-residue chain is E3 ubiquitin ligase Rnf121 (327 aa).

The residue at position 2 (Ala2) is an N-acetylalanine. 5 consecutive transmembrane segments (helical) span residues 50 to 70 (MHAEMVLILIATLVVAQLLLV), 79 to 99 (SYNMVTLFQMWVVPLYFTVKL), 100 to 120 (HWWRFLVIWIFFSAVTAFVTF), 148 to 168 (ATGIVGYMAVMFTLFGLNLLF), and 172 to 192 (PEDAMDFGISLLFYGLYYGVL). Residues 226–276 (CAVCGQQIFVDVNEEGIIENTYRLSCNHVFHEFCIRGWCIVGKKQTCPYCK) form an RING-type; atypical zinc finger. A helical transmembrane segment spans residues 306 to 326 (LVAWQPVIIGLVQGISYILGL).

The protein belongs to the RNF121 family.

Its subcellular location is the endoplasmic reticulum membrane. The catalysed reaction is S-ubiquitinyl-[E2 ubiquitin-conjugating enzyme]-L-cysteine + [acceptor protein]-L-lysine = [E2 ubiquitin-conjugating enzyme]-L-cysteine + N(6)-ubiquitinyl-[acceptor protein]-L-lysine.. It functions in the pathway protein modification; protein ubiquitination. Its function is as follows. E3 ubiquitin ligase which accepts ubiquitin and transfers it to substrates thereby promoting their degradation by the endoplasmic reticulum-associated degradation (ERAD) pathway which is a pathway involved in ubiquitin-dependent degradation of misfolded endoplasmic reticulum proteins. May regulate the unfolded protein response to reduce endoplasmic reticulum stress. In Mus musculus (Mouse), this protein is E3 ubiquitin ligase Rnf121 (Rnf121).